The primary structure comprises 168 residues: Heat shock protein beta-9 (168 aa).

The segment covering 1 to 12 (MQRVGSSFSTGQ) has biased composition (polar residues). Disordered stretches follow at residues 1–25 (MQRVGSSFSTGQREPGENRVASRCP), 83–104 (TGQRQHESNDPSRGRYRMEQSV), and 129–168 (LWLRGQNKCLPPPEAQTGQSQKPRRGGPKSSLQNESVKNP). One can recognise a sHSP domain in the interval 38 to 151 (LPVRLLRDEV…EAQTGQSQKP (114 aa)). A compositionally biased stretch (basic and acidic residues) spans 86 to 104 (RQHESNDPSRGRYRMEQSV). Residues 158 to 168 (SSLQNESVKNP) are compositionally biased toward polar residues.

It belongs to the small heat shock protein (HSP20) family. In terms of tissue distribution, testis specific.

Its subcellular location is the cytoplasm. The protein localises to the nucleus. The polypeptide is Heat shock protein beta-9 (Hspb9) (Mus musculus (Mouse)).